We begin with the raw amino-acid sequence, 144 residues long: Large ribosomal subunit protein uL15 (144 aa).

Residues 1–54 (MRLNTLSPAEGSKKAGKRLGRGIGSGLGKTGGRGHKGQNSRSGGGVRRGFEGGQ) form a disordered region. The segment covering 21 to 31 (RGIGSGLGKTG) has biased composition (gly residues).

This sequence belongs to the universal ribosomal protein uL15 family. In terms of assembly, part of the 50S ribosomal subunit.

Binds to the 23S rRNA. The sequence is that of Large ribosomal subunit protein uL15 from Enterobacter sp. (strain 638).